The following is a 139-amino-acid chain: ATP synthase epsilon chain (139 aa).

Belongs to the ATPase epsilon chain family. F-type ATPases have 2 components, CF(1) - the catalytic core - and CF(0) - the membrane proton channel. CF(1) has five subunits: alpha(3), beta(3), gamma(1), delta(1), epsilon(1). CF(0) has three main subunits: a, b and c.

Its subcellular location is the cell inner membrane. Its function is as follows. Produces ATP from ADP in the presence of a proton gradient across the membrane. This Pectobacterium carotovorum subsp. carotovorum (strain PC1) protein is ATP synthase epsilon chain.